The sequence spans 79 residues: Cell division protein ZapB (79 aa).

Positions 3-79 form a coiled coil; that stretch reads LEVFEKLEAK…QALLGRMEEV (77 aa).

Belongs to the ZapB family. In terms of assembly, homodimer. The ends of the coiled-coil dimer bind to each other, forming polymers. Interacts with FtsZ.

The protein resides in the cytoplasm. Functionally, non-essential, abundant cell division factor that is required for proper Z-ring formation. It is recruited early to the divisome by direct interaction with FtsZ, stimulating Z-ring assembly and thereby promoting cell division earlier in the cell cycle. Its recruitment to the Z-ring requires functional FtsA or ZipA. In Salmonella typhi, this protein is Cell division protein ZapB.